The primary structure comprises 1412 residues: MTSSTTGDRRWGTTRRSGMTILGKVAVPKPINLPSQRLENQGLDPNVEIVPKGTLSWGSKSSLNAWGTSSLSPRTESGPGSPSHLSNRPSSGGSVTRPSTADSNKAHDSSSSVAWDSNSRPSSASGVFPSNQPSVALQRPHSADTRPGSSQLSRFAEPVSETSATWGQHVAPEKLGVAPSKNDGFSLTSGDFPSLGAEKDTSEKSTRPQDAGPHARPPSSSGRSVEGQGVDCTEEANDRIGDANSWRRENQPYSEDAPRHCREEGQLDSRGSQSYPNANFPPRYDAWRGPPVNNHQGGGWYGGNHPYGAPMGPGGFHMDPFPFYPTQVPPAPGHGAGPRGNHANNERMFRPPMLDSYVHPRMQTRPGFYVGPAPHEGYYGPPMGYGSPSNRDLPFAGRPTGPHAYNNHSGQGGYDTPGSSVSLERNESSHSQETQRPYKVLLKHQDGRFGEDNAKREEFLGNRLPNAEKIAQQMQTSRNERREIRNDASGEVQPVKAELAAPGDPSLIQKIEGLNAKTRTNDGWQNSSSVVNRDEQESQPRTLNSGNSANKVSARNHRTGHASDSKNSSHYNQGDSATNKNAEPAAMGGTSIFRRPTQQTQGRADPQTKRIVNSEGNDAWQKTTVMSGSSHTTLATNTESFREVNVDDSLDTESIRRPGSGISADPKDNQRSTMRELARQRAQQRQKEEEERARDQRAKALAKLEELNRRSQIYEEGSVKNMEAASNASPADMPTDPGSHSSNATNSVEPTGGSGKNTTQNTRTSTEYANNVGPSQQDNLPRDGGASKQKRLGYKQKQNIIFEKKPTGSSVATAEVFDVVPSPEVVNEGVSSNNSDMPATSTVSAESTFPKRKNNRNGKKKHKAEETATMNTTRVAVGKETKSGDESIETARARAAEIELGSVSVPSLDIKVSGDSSEQISSFTNEESQNRAKNNWKSQHVRRTQRNSLVNKPAEKFSGNNAVIWAPVHPQQKADVSTGGGSQTTVPEFGTSSKSQHQGQTSSKSKRVEIERYVPKPIVKEMAEQIVSKNLVTSAPDMSENVNQKENRGGEGTGILQPSGSTAGKSGSPSKSRHGNGRQGKHGREHASWHQRGSGAPTKALEDGQFVTSNQPIRGTVNYHSSKQTEQIAAKDQTTCNKDGWNDGWYMTPETHYSAAEEMESSAVGKDQGMSMHGRQHASRSNKDGGSNYGDPKKGNKRDFNKAHTQHSGHGFSQPDLPAASKEGRVPGDHVWHTANRTGKYGGRESTRDKPYGSQEKNVVGYEHQGFTTEQKTTSADTQAQLQNRSTNKEVQVEQNPNSMFQKNTGQGRRFGRGQESQGGWGLPAQENMHHHHQRPPSNRDRQKQNLHYEYKPVGSHTYDGERSREQSKESSQTEGPRYREKGQGQQRQGGYQQQRGTSGRNGGHGFTGDRN.

Disordered stretches follow at residues 1 to 276 (MTSS…QSYP), 384 to 437 (GYGS…TQRP), 472 to 798 (QQMQ…KQKQ), 827 to 888 (NEGV…DESI), 909 to 1144 (DIKV…WNDG), and 1156 to 1412 (AEEM…GDRN). The span at 56 to 103 (SWGSKSSLNAWGTSSLSPRTESGPGSPSHLSNRPSSGGSVTRPSTADS) shows a compositional bias: polar residues. A Phosphoserine modification is found at serine 72. Residues 109-119 (SSSSVAWDSNS) show a composition bias toward low complexity. Positions 120 to 135 (RPSSASGVFPSNQPSV) are enriched in polar residues. 2 stretches are compositionally biased toward basic and acidic residues: residues 197–207 (AEKDTSEKSTR) and 236–267 (ANDRIGDANSWRRENQPYSEDAPRHCREEGQL). The segment covering 478–488 (RNERREIRNDA) has biased composition (basic and acidic residues). Composition is skewed to polar residues over residues 517–531 (KTRTNDGWQNSSSVV), 539–553 (QPRTLNSGNSANKVS), 565–581 (SKNSSHYNQGDSATNKN), and 610–639 (RIVNSEGNDAWQKTTVMSGSSHTTLATNTE). Basic and acidic residues predominate over residues 665–713 (DPKDNQRSTMRELARQRAQQRQKEEEERARDQRAKALAKLEELNRRSQI). A coiled-coil region spans residues 667 to 717 (KDNQRSTMRELARQRAQQRQKEEEERARDQRAKALAKLEELNRRSQIYEEG). Composition is skewed to polar residues over residues 738–749 (GSHSSNATNSVE), 756–779 (KNTTQNTRTSTEYANNVGPSQQDN), and 829–847 (GVSSNNSDMPATSTVSAES). Over residues 850-862 (PKRKNNRNGKKKH) the composition is skewed to basic residues. Basic and acidic residues predominate over residues 877-888 (VGKETKSGDESI). A Phosphoserine modification is found at serine 883. Polar residues-rich tracts occupy residues 914–938 (GDSSEQISSFTNEESQNRAKNNWKS) and 983–1003 (QTTVPEFGTSSKSQHQGQTSS). Positions 1006-1023 (KRVEIERYVPKPIVKEMA) are enriched in basic and acidic residues. Over residues 1056–1070 (LQPSGSTAGKSGSPS) the composition is skewed to polar residues. Basic residues predominate over residues 1071–1084 (KSRHGNGRQGKHGR). Residues 1106–1137 (FVTSNQPIRGTVNYHSSKQTEQIAAKDQTTCN) are compositionally biased toward polar residues. 3 stretches are compositionally biased toward basic and acidic residues: residues 1191–1202 (DPKKGNKRDFNK), 1222–1232 (KEGRVPGDHVW), and 1242–1251 (GGRESTRDKP). 2 stretches are compositionally biased toward polar residues: residues 1266 to 1286 (GFTTEQKTTSADTQAQLQNRS) and 1293 to 1307 (VEQNPNSMFQKNTGQ). Basic and acidic residues-rich tracts occupy residues 1338-1351 (SNRDRQKQNLHYEY) and 1359-1369 (YDGERSREQSK). Positions 1384 to 1397 (QGQQRQGGYQQQRG) are enriched in low complexity. The segment covering 1400 to 1412 (GRNGGHGFTGDRN) has biased composition (gly residues).

In terms of assembly, interacts with TCP14 and TCP15.

Functionally, involved in the regulation of the chromatin structure and DNA methylation at the SNC1 locus. Regulates the expression of SNC1 at chromatin level. The polypeptide is Protein MODIFIER OF SNC1 1 (MOS1) (Arabidopsis thaliana (Mouse-ear cress)).